A 269-amino-acid chain; its full sequence is ATLREIETRLKSIKNIEKITNTMKVVASTRMGRAQRAMASSRAFREGDSDFFATAETSTPETAEKTLIIAVSSDKGLCGSIHSQIAKATRAKLQETPNADVVTIGDKIKAQMLRTHSSNVVLSFNGVGKEAPTFWEASLIADEIRKLGDYDKIEVMYNKFVSGVAFEPSVFPSFSPISIEESPKLSEFELEEDQAIPTSLSQISLTNAILNAMAEGYASEISARRNAMDNASKNAGEMINKYSILYNRTRQAVITNELVDIITGASSLD.

F-type ATP synthases have 2 components, the catalytic core F(1) and the membrane-embedded component F(0), linked together by a central stalk and a peripheral stalk. The central stalk, also called rotor shaft, is often seen as part of F(1). The peripheral stalk is seen as part of F(0). F(0) contains the membrane channel next to the rotor. F-type ATP synthases form dimers but each monomer functions independently in ATP generation. The dimer consists of 18 different polypeptides: ATP1 (subunit alpha, part of F(1), 3 molecules per monomer), ATP2 (subunit beta, part of F(1), 3 molecules per monomer), ATP3 (subunit gamma, part of the central stalk), ATP4 (subunit b, part of the peripheral stalk), ATP5/OSCP (subunit 5/OSCP, part of the peripheral stalk), ATP6 (subunit a, part of the peripheral stalk), ATP7 (subunit d, part of the peripheral stalk), ATP8 (subunit 8, part of the peripheral stalk), OLI1 (subunit c, part of the rotor, 10 molecules per monomer), ATP14 (subunit h, part of the peripheral stalk), ATP15 (subunit epsilon, part of the central stalk), ATP16 (subunit delta, part of the central stalk), ATP17 (subunit f, part of the peripheral stalk), ATP18 (subunit i/j, part of the peripheral stalk). Dimer-specific subunits are ATP19 (subunit k, at interface between monomers), ATP20 (subunit g, at interface between monomers), TIM11 (subunit e, at interface between monomers). Also contains subunit L.

It localises to the mitochondrion inner membrane. Mitochondrial membrane ATP synthase (F(1)F(0) ATP synthase or Complex V) produces ATP from ADP in the presence of a proton gradient across the membrane which is generated by electron transport complexes of the respiratory chain. F-type ATP synthases consist of two structural domains, F(1) - containing the extramembraneous catalytic core, and F(0) - containing the membrane proton channel, linked together by a central stalk and a peripheral stalk. During catalysis, ATP synthesis in the catalytic domain of F(1) is coupled via a rotary mechanism of the central stalk subunits to proton translocation. Part of the complex F(1) domain and the central stalk which is part of the complex rotary element. The gamma/ATP3 subunit protrudes into the catalytic domain formed of alpha/ATP1(3)beta/ATP2(3). Rotation of the central stalk against the surrounding alpha/ATP1(3)beta/ATP2(3) subunits leads to hydrolysis of ATP in three separate catalytic sites on the beta/ATP2 subunits. In Pichia angusta (Yeast), this protein is ATP synthase subunit gamma, mitochondrial.